Reading from the N-terminus, the 132-residue chain is Small ribosomal subunit protein uS8 (132 aa).

It belongs to the universal ribosomal protein uS8 family. Part of the 30S ribosomal subunit. Contacts proteins S5 and S12.

One of the primary rRNA binding proteins, it binds directly to 16S rRNA central domain where it helps coordinate assembly of the platform of the 30S subunit. This Streptococcus gordonii (strain Challis / ATCC 35105 / BCRC 15272 / CH1 / DL1 / V288) protein is Small ribosomal subunit protein uS8.